A 68-amino-acid polypeptide reads, in one-letter code: Large ribosomal subunit protein uL29 (68 aa).

It belongs to the universal ribosomal protein uL29 family.

This is Large ribosomal subunit protein uL29 from Persephonella marina (strain DSM 14350 / EX-H1).